Consider the following 154-residue polypeptide: 6,7-dimethyl-8-ribityllumazine synthase (154 aa).

Residues F23, 57–59, and 81–83 contribute to the 5-amino-6-(D-ribitylamino)uracil site; these read AFE and AII. Residue 86–87 participates in (2S)-2-hydroxy-3-oxobutyl phosphate binding; sequence ST. The active-site Proton donor is H89. F114 lines the 5-amino-6-(D-ribitylamino)uracil pocket. R128 contributes to the (2S)-2-hydroxy-3-oxobutyl phosphate binding site.

Belongs to the DMRL synthase family.

The catalysed reaction is (2S)-2-hydroxy-3-oxobutyl phosphate + 5-amino-6-(D-ribitylamino)uracil = 6,7-dimethyl-8-(1-D-ribityl)lumazine + phosphate + 2 H2O + H(+). It functions in the pathway cofactor biosynthesis; riboflavin biosynthesis; riboflavin from 2-hydroxy-3-oxobutyl phosphate and 5-amino-6-(D-ribitylamino)uracil: step 1/2. In terms of biological role, catalyzes the formation of 6,7-dimethyl-8-ribityllumazine by condensation of 5-amino-6-(D-ribitylamino)uracil with 3,4-dihydroxy-2-butanone 4-phosphate. This is the penultimate step in the biosynthesis of riboflavin. This is 6,7-dimethyl-8-ribityllumazine synthase from Nitratiruptor sp. (strain SB155-2).